The following is a 120-amino-acid chain: Small ribosomal subunit protein uS13 (120 aa).

The disordered stretch occupies residues 96–120 (PCRGQRTRTNARTRKGPRKAIAGKK).

This sequence belongs to the universal ribosomal protein uS13 family. Part of the 30S ribosomal subunit. Forms a loose heterodimer with protein S19. Forms two bridges to the 50S subunit in the 70S ribosome.

Located at the top of the head of the 30S subunit, it contacts several helices of the 16S rRNA. In the 70S ribosome it contacts the 23S rRNA (bridge B1a) and protein L5 of the 50S subunit (bridge B1b), connecting the 2 subunits; these bridges are implicated in subunit movement. Contacts the tRNAs in the A and P-sites. This is Small ribosomal subunit protein uS13 from Dechloromonas aromatica (strain RCB).